The sequence spans 188 residues: dCTP deaminase (188 aa).

DCTP-binding positions include 111 to 116 (KSTYAR), 135 to 137 (TLE), glutamine 156, tyrosine 170, and glutamine 180. The Proton donor/acceptor role is filled by glutamate 137.

It belongs to the dCTP deaminase family. In terms of assembly, homotrimer.

The catalysed reaction is dCTP + H2O + H(+) = dUTP + NH4(+). It functions in the pathway pyrimidine metabolism; dUMP biosynthesis; dUMP from dCTP (dUTP route): step 1/2. In terms of biological role, catalyzes the deamination of dCTP to dUTP. The chain is dCTP deaminase from Coxiella burnetii (strain CbuK_Q154) (Coxiella burnetii (strain Q154)).